A 715-amino-acid chain; its full sequence is Polyribonucleotide nucleotidyltransferase (715 aa).

Aspartate 493 and aspartate 499 together coordinate Mg(2+). In terms of domain architecture, KH spans 560-619 (PRMITVKINPEKIRDVIGKGGSVIRALTEETGTTIDISDDGVVTIASTSSEGMAEAKKRI). The S1 motif domain occupies 629-697 (GQVYEGTVLK…EKGRVRLSAK (69 aa)).

It belongs to the polyribonucleotide nucleotidyltransferase family. The cofactor is Mg(2+).

The protein resides in the cytoplasm. The enzyme catalyses RNA(n+1) + phosphate = RNA(n) + a ribonucleoside 5'-diphosphate. Its function is as follows. Involved in mRNA degradation. Catalyzes the phosphorolysis of single-stranded polyribonucleotides processively in the 3'- to 5'-direction. This is Polyribonucleotide nucleotidyltransferase from Burkholderia cenocepacia (strain HI2424).